A 156-amino-acid polypeptide reads, in one-letter code: Biotin carboxyl carrier protein of acetyl-CoA carboxylase (156 aa).

The Biotinyl-binding domain maps to 80 to 156; the sequence is GNVVRSPMVG…EFDQPLFTIV (77 aa). Lys122 carries the N6-biotinyllysine modification.

In terms of assembly, homodimer.

It participates in lipid metabolism; fatty acid biosynthesis. Its function is as follows. This protein is a component of the acetyl coenzyme A carboxylase complex; first, biotin carboxylase catalyzes the carboxylation of the carrier protein and then the transcarboxylase transfers the carboxyl group to form malonyl-CoA. This chain is Biotin carboxyl carrier protein of acetyl-CoA carboxylase (accB), found in Pseudomonas aeruginosa (strain ATCC 15692 / DSM 22644 / CIP 104116 / JCM 14847 / LMG 12228 / 1C / PRS 101 / PAO1).